Reading from the N-terminus, the 428-residue chain is D-amino acid dehydrogenase (428 aa).

3 to 17 (VVVLGSGVVGVTSAY) provides a ligand contact to FAD.

The protein belongs to the DadA oxidoreductase family. FAD serves as cofactor.

The catalysed reaction is a D-alpha-amino acid + A + H2O = a 2-oxocarboxylate + AH2 + NH4(+). The protein operates within amino-acid degradation; D-alanine degradation; NH(3) and pyruvate from D-alanine: step 1/1. Functionally, oxidative deamination of D-amino acids. The polypeptide is D-amino acid dehydrogenase (Paraburkholderia phymatum (strain DSM 17167 / CIP 108236 / LMG 21445 / STM815) (Burkholderia phymatum)).